Reading from the N-terminus, the 563-residue chain is Dihydroxy-acid dehydratase (563 aa).

Cys-50 is a [2Fe-2S] cluster binding site. Asp-82 is a Mg(2+) binding site. Position 123 (Cys-123) interacts with [2Fe-2S] cluster. 2 residues coordinate Mg(2+): Asp-124 and Lys-125. Lys-125 is subject to N6-carboxylysine. Position 195 (Cys-195) interacts with [2Fe-2S] cluster. A Mg(2+)-binding site is contributed by Glu-447. The Proton acceptor role is filled by Ser-473.

It belongs to the IlvD/Edd family. Homodimer. It depends on [2Fe-2S] cluster as a cofactor. Requires Mg(2+) as cofactor.

The enzyme catalyses (2R)-2,3-dihydroxy-3-methylbutanoate = 3-methyl-2-oxobutanoate + H2O. The catalysed reaction is (2R,3R)-2,3-dihydroxy-3-methylpentanoate = (S)-3-methyl-2-oxopentanoate + H2O. It participates in amino-acid biosynthesis; L-isoleucine biosynthesis; L-isoleucine from 2-oxobutanoate: step 3/4. Its pathway is amino-acid biosynthesis; L-valine biosynthesis; L-valine from pyruvate: step 3/4. Its function is as follows. Functions in the biosynthesis of branched-chain amino acids. Catalyzes the dehydration of (2R,3R)-2,3-dihydroxy-3-methylpentanoate (2,3-dihydroxy-3-methylvalerate) into 2-oxo-3-methylpentanoate (2-oxo-3-methylvalerate) and of (2R)-2,3-dihydroxy-3-methylbutanoate (2,3-dihydroxyisovalerate) into 2-oxo-3-methylbutanoate (2-oxoisovalerate), the penultimate precursor to L-isoleucine and L-valine, respectively. The sequence is that of Dihydroxy-acid dehydratase from Nostoc sp. (strain PCC 7120 / SAG 25.82 / UTEX 2576).